The primary structure comprises 427 residues: Sialic acid TRAP transporter large permease protein SiaM (427 aa).

12 helical membrane-spanning segments follow: residues 11-31 (LLFA…AFLI), 52-72 (FTLL…SAGI), 82-102 (SLVG…SLLF), 140-160 (ASCI…YGVV), 165-185 (IGAL…ALMV), 214-234 (AFLS…GKFT), 246-266 (ALFL…IEIL), 270-290 (VNTT…GWIV), 301-321 (DYFL…NLLL), 322-342 (LFLG…PFLV), 348-368 (VGID…IGIL), and 394-414 (VLPL…FPQF).

It belongs to the TRAP transporter large permease family. The complex comprises the extracytoplasmic solute receptor protein SiaP, and the two transmembrane proteins SiaQ and SiaM. SiaQ and SiaM form a tight 1:1 complex.

It is found in the cell inner membrane. Functionally, part of the tripartite ATP-independent periplasmic (TRAP) transport system SiaPQM that catalyzes unidirectional Na(+)-dependent sialic acid uptake. The polypeptide is Sialic acid TRAP transporter large permease protein SiaM (Vibrio cholerae serotype O1 (strain ATCC 39315 / El Tor Inaba N16961)).